We begin with the raw amino-acid sequence, 544 residues long: Chaperonin GroEL 1 (544 aa).

ATP is bound by residues 29–32, 86–90, Gly413, 479–481, and Asp495; these read TLGP, DGTTT, and NAA.

The protein belongs to the chaperonin (HSP60) family. As to quaternary structure, forms a cylinder of 14 subunits composed of two heptameric rings stacked back-to-back. Interacts with the co-chaperonin GroES.

The protein resides in the cytoplasm. It catalyses the reaction ATP + H2O + a folded polypeptide = ADP + phosphate + an unfolded polypeptide.. Functionally, together with its co-chaperonin GroES, plays an essential role in assisting protein folding. The GroEL-GroES system forms a nano-cage that allows encapsulation of the non-native substrate proteins and provides a physical environment optimized to promote and accelerate protein folding. The protein is Chaperonin GroEL 1 of Parasynechococcus marenigrum (strain WH8102).